The primary structure comprises 98 residues: uncharacterized protein (98 aa).

This is an uncharacterized protein from Invertebrate iridescent virus 6 (IIV-6).